Consider the following 352-residue polypeptide: MEGISIYTSDNYTEEMGSGDYDSIKEPCFREKNAHFNRIFLPTIYSIIFLTGIVGNGLVILVMGYQKKLRSMTDKYRLHLSVADLLFVITLPFWAVDAVANWYFGNFLCKAVHVIYTVNLYSSVLILAFISLDRYLAIVHATNSQKPRKLLAEKVVYVGVWIPALLLTIPGFIFASVSEADDRFICDRFYPNDLWVVVFQFQHIMVGLILPGIVILSCYCIIISKLSHSKGHQKRKALKTTVILILAFFACWLPYYIGISIDSFILLEIIKQGCEFENTVHKWISITEALAFFHCCLNPILYAFLGAKFKTSAQHALTSVSRGSSLKILSKGKRGGHSSVSTESESSSFHSS.

Residues 1 to 21 (MEGISIYTSDNYTEEMGSGDY) form an important for chemokine binding and signaling region. The Extracellular segment spans residues 1–38 (MEGISIYTSDNYTEEMGSGDYDSIKEPCFREKNAHFNR). Tyr7 carries the post-translational modification Sulfotyrosine. The N-linked (GlcNAc...) asparagine glycan is linked to Asn11. Tyr12 is modified (sulfotyrosine). The O-linked (Xyl...) (chondroitin sulfate) serine glycan is linked to Ser18. Tyr21 is subject to Sulfotyrosine. Cystine bridges form between Cys28–Cys274 and Cys109–Cys186. The helical transmembrane segment at 39–63 (IFLPTIYSIIFLTGIVGNGLVILVM) threads the bilayer. Over 64–77 (GYQKKLRSMTDKYR) the chain is Cytoplasmic. Residues 78–99 (LHLSVADLLFVITLPFWAVDAV) traverse the membrane as a helical segment. The chemokine binding stretch occupies residues 94–97 (WAVD). At 100–110 (ANWYFGNFLCK) the chain is on the extracellular side. The chain crosses the membrane as a helical span at residues 111–130 (AVHVIYTVNLYSSVLILAFI). Residues 113–117 (HVIYT) form a chemokine binding region. Topologically, residues 131–154 (SLDRYLAIVHATNSQKPRKLLAEK) are cytoplasmic. Positions 133–135 (DRY) match the Important for signaling motif. Residues 135–147 (YLAIVHATNSQKP) are involved in dimerization; when bound to chemokine. A helical membrane pass occupies residues 155–174 (VVYVGVWIPALLLTIPGFIF). The Extracellular segment spans residues 175-195 (ASVSEADDRFICDRFYPNDLW). Residues 186 to 190 (CDRFY) are chemokine binding, important for signaling. Residues 191-210 (PNDLWVVVFQFQHIMVGLIL) form an involved in dimerization region. Residues 196–216 (VVVFQFQHIMVGLILPGIVIL) form a helical membrane-spanning segment. Over 217 to 241 (SCYCIIISKLSHSKGHQKRKALKTT) the chain is Cytoplasmic. Residues 242-261 (VILILAFFACWLPYYIGISI) traverse the membrane as a helical segment. The Extracellular portion of the chain corresponds to 262 to 282 (DSFILLEIIKQGCEFENTVHK). Positions 266–268 (LLE) are involved in dimerization. A helical membrane pass occupies residues 283–302 (WISITEALAFFHCCLNPILY). Residues 303–352 (AFLGAKFKTSAQHALTSVSRGSSLKILSKGKRGGHSSVSTESESSSFHSS) lie on the Cytoplasmic side of the membrane. Ser319 and Ser321 each carry phosphoserine. Phosphoserine; by PKC and GRK6 occurs at positions 324 and 325. The interval 329–352 (LSKGKRGGHSSVSTESESSSFHSS) is disordered. At Ser330 the chain carries Phosphoserine; by GRK6. Lys331 participates in a covalent cross-link: Glycyl lysine isopeptide (Lys-Gly) (interchain with G-Cter in ubiquitin). Positions 337–352 (HSSVSTESESSSFHSS) are enriched in low complexity. Ser339 is subject to Phosphoserine; by GRK6. 2 positions are modified to phosphoserine: Ser348 and Ser351.

The protein belongs to the G-protein coupled receptor 1 family. As to quaternary structure, monomer. Can form homodimers. Interacts with CD164. Interacts with ARRB2; the interaction is dependent on the C-terminal phosphorylation of CXCR4 and allows activation of MAPK1 and MAPK3. Interacts with ARR3; the interaction is dependent on the C-terminal phosphorylation of CXCR4 and modulates calcium mobilization. Interacts with RNF113A; the interaction, enhanced by CXCL12, promotes CXCR4 ubiquitination and subsequent degradation. Interacts (via the cytoplasmic C-terminal) with ITCH (via the WW domains I and II); the interaction, enhanced by CXCL12, promotes CXCR4 ubiquitination and leads to its degradation. Interacts with extracellular ubiquitin. Interacts with DBN1; this interaction is enhanced by antigenic stimulation. Following LPS binding, may form a complex with GDF5, HSP90AA1 and HSPA8. In terms of processing, phosphorylated on agonist stimulation. Rapidly phosphorylated on serine and threonine residues in the C-terminal. Phosphorylation at Ser-324 and Ser-325 leads to recruitment of ITCH, ubiquitination and protein degradation. Ubiquitinated after ligand binding, leading to its degradation. Ubiquitinated by ITCH at the cell membrane on agonist stimulation. The ubiquitin-dependent mechanism, endosomal sorting complex required for transport (ESCRT), then targets CXCR4 for lysosomal degradation. This process is dependent also on prior Ser-/Thr-phosphorylation in the C-terminal of CXCR4. Also binding of ARRB1 to STAM negatively regulates CXCR4 sorting to lysosomes though modulating ubiquitination of SFR5S. Post-translationally, sulfation is required for efficient binding of CXCL12/SDF-1alpha and promotes its dimerization. In terms of processing, O- and N-glycosylated. N-glycosylation can mask coreceptor function. The O-glycosylation chondroitin sulfate attachment does not affect interaction with CXCL12/SDF-1alpha nor its coreceptor activity.

It localises to the cell membrane. Its subcellular location is the cell junction. The protein resides in the early endosome. The protein localises to the late endosome. It is found in the lysosome. Its function is as follows. Receptor for the C-X-C chemokine CXCL12/SDF-1 that transduces a signal by increasing intracellular calcium ion levels and enhancing MAPK1/MAPK3 activation. Involved in the AKT signaling cascade. Plays a role in regulation of cell migration, e.g. during wound healing. Acts as a receptor for extracellular ubiquitin; leading to enhanced intracellular calcium ions and reduced cellular cAMP levels. Binds bacterial lipopolysaccharide (LPS) et mediates LPS-induced inflammatory response, including TNF secretion by monocytes. Involved in hematopoiesis and in cardiac ventricular septum formation. Also plays an essential role in vascularization of the gastrointestinal tract, probably by regulating vascular branching and/or remodeling processes in endothelial cells. Involved in cerebellar development. In the CNS, could mediate hippocampal-neuron survival. The protein is C-X-C chemokine receptor type 4 (CXCR4) of Cercocebus atys (Sooty mangabey).